Here is a 68-residue protein sequence, read N- to C-terminus: Molybdenum-pterin-binding protein 1 (68 aa).

One can recognise a Mop domain in the interval 2-68 (SISARNQLKG…IKSTDVMILA (67 aa)).

Functionally, binds one mole of molybdenum per mole of protein and contains a pterin. This is Molybdenum-pterin-binding protein 1 (mopI) from Clostridium pasteurianum.